Reading from the N-terminus, the 487-residue chain is b(0,+)-type amino acid transporter 1 (487 aa).

The interval M1 to K22 is disordered. Over M1 to G31 the chain is Cytoplasmic. A Phosphoserine modification is found at S18. A helical membrane pass occupies residues L32 to V55. L-arginine is bound at residue I43–G47. Over L56–V62 the chain is Extracellular. A helical transmembrane segment spans residues G63–A84. Residues E85–Y110 are Cytoplasmic-facing. Residues L111–A137 traverse the membrane as a helical segment. Topologically, residues T138–P147 are extracellular. Helical transmembrane passes span K148–S169 and V170–I193. Residues S194–S217 lie on the Extracellular side of the membrane. A helical membrane pass occupies residues V218–L238. Position 233 (D233) interacts with L-arginine. Residues N239–N251 are Cytoplasmic-facing. A helical membrane pass occupies residues L252–Y274. Residues F275–S302 lie on the Extracellular side of the membrane. A helical membrane pass occupies residues W303 to G325. Topologically, residues R326–P351 are cytoplasmic. Transmembrane regions (helical) follow at residues A352–D370 and I371–L391. Over G392–P410 the chain is Cytoplasmic. A helical transmembrane segment spans residues I411–T431. Residues N432–A434 lie on the Extracellular side of the membrane. Residues W435–F450 traverse the membrane as a helical segment. Residues Y451–K487 are Cytoplasmic-facing.

This sequence belongs to the amino acid-polyamine-organocation (APC) superfamily. Disulfide-linked heterodimer composed of the catalytic light chain subunit SLC7A9 and the heavy chain subunit. The heterodimer is the minimal functional unit. Assembles in heterotetramers (dimers of heterodimers) and higher order oligomers. Interacts with CAV1. In terms of tissue distribution, kidney and small intestine.

The protein localises to the apical cell membrane. It catalyses the reaction L-leucine(out) + L-arginine(in) = L-leucine(in) + L-arginine(out). The enzyme catalyses L-histidine(out) + L-arginine(in) = L-histidine(in) + L-arginine(out). The catalysed reaction is L-arginine(in) + L-phenylalanine(out) = L-arginine(out) + L-phenylalanine(in). It carries out the reaction L-cysteine(out) + L-arginine(in) = L-cysteine(in) + L-arginine(out). It catalyses the reaction L-cystine(out) + L-arginine(in) = L-cystine(in) + L-arginine(out). The enzyme catalyses L-lysine(out) + L-arginine(in) = L-lysine(in) + L-arginine(out). Mediates the electrogenic exchange between cationic amino acids and neutral amino acids, with a stoichiometry of 1:1. Has system b(0,+)-like activity with high affinity for extracellular cationic amino acids and L-cystine and lower affinity for intracellular neutral amino acids. Substrate exchange is driven by high concentration of intracellular neutral amino acids and the intracellular reduction of L-cystine to L-cysteine. Required for reabsorption of L-cystine and dibasic amino acids across the brush border membrane in renal proximal tubules. The polypeptide is b(0,+)-type amino acid transporter 1 (Oryctolagus cuniculus (Rabbit)).